A 243-amino-acid polypeptide reads, in one-letter code: Cell division protein ZipA (243 aa).

Residues 1-4 are Periplasmic-facing; sequence MSDM. Residues 5-25 traverse the membrane as a helical segment; it reads AMIRIGILIAGLLLVAAIFLF. The Cytoplasmic segment spans residues 26–243; the sequence is GRPKKSPQGR…APPLTKSPRW (218 aa). The tract at residues 30 to 89 is disordered; it reads KSPQGRRVDKGEGQPRERREPVISSEFGAEGDAAERAEGVEQSELNLEGQDASGGNEVGK. The segment covering 35 to 50 has biased composition (basic and acidic residues); it reads RRVDKGEGQPRERREP.

The protein belongs to the ZipA family. Interacts with FtsZ via their C-terminal domains.

The protein resides in the cell inner membrane. Essential cell division protein that stabilizes the FtsZ protofilaments by cross-linking them and that serves as a cytoplasmic membrane anchor for the Z ring. Also required for the recruitment to the septal ring of downstream cell division proteins. The protein is Cell division protein ZipA of Xanthomonas axonopodis pv. citri (strain 306).